A 347-amino-acid polypeptide reads, in one-letter code: 3-isopropylmalate dehydrogenase (347 aa).

R95, R105, R129, and D220 together coordinate substrate. D220, D244, and D248 together coordinate Mg(2+). Residue 280–292 (GSAPDIAGQGKAD) participates in NAD(+) binding.

Belongs to the isocitrate and isopropylmalate dehydrogenases family. LeuB type 2 subfamily. In terms of assembly, homodimer. The cofactor is Mg(2+). Mn(2+) is required as a cofactor.

Its subcellular location is the cytoplasm. The catalysed reaction is (2R,3S)-3-isopropylmalate + NAD(+) = 4-methyl-2-oxopentanoate + CO2 + NADH. Its pathway is amino-acid biosynthesis; L-leucine biosynthesis; L-leucine from 3-methyl-2-oxobutanoate: step 3/4. Its function is as follows. Catalyzes the oxidation of 3-carboxy-2-hydroxy-4-methylpentanoate (3-isopropylmalate) to 3-carboxy-4-methyl-2-oxopentanoate. The product decarboxylates to 4-methyl-2 oxopentanoate. This is 3-isopropylmalate dehydrogenase from Beutenbergia cavernae (strain ATCC BAA-8 / DSM 12333 / CCUG 43141 / JCM 11478 / NBRC 16432 / NCIMB 13614 / HKI 0122).